A 552-amino-acid polypeptide reads, in one-letter code: Antibiotic resistance protein MAB_2355c (552 aa).

2 ABC transporter domains span residues Val-4–Asp-270 and Ala-332–Val-552. ATP-binding positions include Gly-37–Thr-44 and Gly-364–Ser-371.

This sequence belongs to the ABC transporter superfamily. ABCF family.

It catalyses the reaction ATP + H2O = ADP + phosphate + H(+). With respect to regulation, the ATPase activity can be inhibited by ribosome-targeting antibiotics. In terms of biological role, exhibits ATP hydrolysis activity and contributes to macrolide resistance by ribosome protection. Can also hydrolyze GTP, TTP and CTP but to a lesser extent than ATP. In vitro, rescues the transcription and translation activities affected by macrolides. Increased expression correlates with increased resistance to clarithromycin, one of the main drugs used to treat M.abscessus. The sequence is that of Antibiotic resistance protein MAB_2355c from Mycobacteroides abscessus (strain ATCC 19977 / DSM 44196 / CCUG 20993 / CIP 104536 / JCM 13569 / NCTC 13031 / TMC 1543 / L948) (Mycobacterium abscessus).